The primary structure comprises 263 residues: 4-hydroxy-tetrahydrodipicolinate reductase (263 aa).

NAD(+) is bound by residues 8–13 (GASGRM), aspartate 34, 99–101 (GTT), and 125–128 (SPNY). Histidine 157 serves as the catalytic Proton donor/acceptor. (S)-2,3,4,5-tetrahydrodipicolinate is bound at residue histidine 158. The Proton donor role is filled by lysine 161. 167 to 168 (GT) contributes to the (S)-2,3,4,5-tetrahydrodipicolinate binding site.

The protein belongs to the DapB family.

The protein localises to the cytoplasm. The catalysed reaction is (S)-2,3,4,5-tetrahydrodipicolinate + NAD(+) + H2O = (2S,4S)-4-hydroxy-2,3,4,5-tetrahydrodipicolinate + NADH + H(+). It catalyses the reaction (S)-2,3,4,5-tetrahydrodipicolinate + NADP(+) + H2O = (2S,4S)-4-hydroxy-2,3,4,5-tetrahydrodipicolinate + NADPH + H(+). It participates in amino-acid biosynthesis; L-lysine biosynthesis via DAP pathway; (S)-tetrahydrodipicolinate from L-aspartate: step 4/4. Functionally, catalyzes the conversion of 4-hydroxy-tetrahydrodipicolinate (HTPA) to tetrahydrodipicolinate. The chain is 4-hydroxy-tetrahydrodipicolinate reductase from Methanococcoides burtonii (strain DSM 6242 / NBRC 107633 / OCM 468 / ACE-M).